The primary structure comprises 218 residues: ADP-sugar pyrophosphatase (218 aa).

N-acetylmethionine is present on Met-1. The residue at position 10 (Ser-10) is a Phosphoserine. Trp-27 contributes to the substrate binding site. Lys-41 is covalently cross-linked (Glycyl lysine isopeptide (Lys-Gly) (interchain with G-Cter in SUMO2)). At Thr-44 the chain carries Phosphothreonine. Residues 45-46 (WE) and Arg-83 contribute to the substrate site. The Nudix hydrolase domain maps to 56 to 196 (KSADAVSVIP…EQHLTVDAKV (141 aa)). Ala-95 lines the Mg(2+) pocket. The short motif at 96-117 (GFIEDGESPEAAALRELEEETG) is the Nudix box element. Phe-97 lines the substrate pocket. Residues Glu-111 and Glu-115 each coordinate Mg(2+). Asp-132 provides a ligand contact to substrate. Glu-165 contacts Mg(2+). Residues Lys-209 and Lys-217 each carry the N6-acetyllysine modification.

It belongs to the Nudix hydrolase family. As to quaternary structure, homodimer. Interacts with PARG. Mg(2+) serves as cofactor. In terms of processing, phosphorylation at Thr-44 is required for homodimer stability; dephosphorylation results in destabilization of the homodimer. Dephosphorylation at Thr-44 promotes the ATP-synthesis activity. As to expression, widely expressed. Most abundant in liver.

It localises to the nucleus. It carries out the reaction D-ribose 5-phosphate + ATP + H(+) = ADP-D-ribose + diphosphate. The enzyme catalyses ADP-D-ribose + H2O = D-ribose 5-phosphate + AMP + 2 H(+). The catalysed reaction is 8-oxo-dGDP + H2O = 8-oxo-dGMP + phosphate + H(+). Enzyme that can either act as an ADP-sugar pyrophosphatase in absence of diphosphate or catalyze the synthesis of ATP in presence of diphosphate. In absence of diphosphate, hydrolyzes with similar activities various modified nucleoside diphosphates such as ADP-ribose, ADP-mannose, ADP-glucose, 8-oxo-GDP and 8-oxo-dGDP. Can also hydrolyze other nucleotide sugars with low activity. In presence of diphosphate, mediates the synthesis of ATP in the nucleus by catalyzing the conversion of ADP-ribose to ATP and ribose 5-phosphate. Nuclear ATP synthesis takes place when dephosphorylated at Thr-44. Nuclear ATP generation is required for extensive chromatin remodeling events that are energy-consuming. Does not play a role in U8 snoRNA decapping activity. Binds U8 snoRNA. This chain is ADP-sugar pyrophosphatase, found in Mus musculus (Mouse).